Reading from the N-terminus, the 212-residue chain is Inner membrane-spanning protein YciB (212 aa).

A run of 6 helical transmembrane segments spans residues F19–L39, A47–L67, A82–W102, T105–G122, L147–F167, and L177–L197.

The protein belongs to the YciB family.

The protein resides in the cell inner membrane. In terms of biological role, plays a role in cell envelope biogenesis, maintenance of cell envelope integrity and membrane homeostasis. This is Inner membrane-spanning protein YciB from Thioalkalivibrio sulfidiphilus (strain HL-EbGR7).